Consider the following 476-residue polypeptide: Proline--tRNA ligase 2 (476 aa).

It belongs to the class-II aminoacyl-tRNA synthetase family. ProS type 3 subfamily. Homodimer.

Its subcellular location is the cytoplasm. It catalyses the reaction tRNA(Pro) + L-proline + ATP = L-prolyl-tRNA(Pro) + AMP + diphosphate. In terms of biological role, catalyzes the attachment of proline to tRNA(Pro) in a two-step reaction: proline is first activated by ATP to form Pro-AMP and then transferred to the acceptor end of tRNA(Pro). In Bacillus cereus (strain ATCC 14579 / DSM 31 / CCUG 7414 / JCM 2152 / NBRC 15305 / NCIMB 9373 / NCTC 2599 / NRRL B-3711), this protein is Proline--tRNA ligase 2.